We begin with the raw amino-acid sequence, 127 residues long: Translation initiation factor 5A (127 aa).

Lys35 is modified (hypusine).

Belongs to the eIF-5A family.

The protein resides in the cytoplasm. Functions by promoting the formation of the first peptide bond. In Methanospirillum hungatei JF-1 (strain ATCC 27890 / DSM 864 / NBRC 100397 / JF-1), this protein is Translation initiation factor 5A.